The following is a 140-amino-acid chain: uncharacterized protein (140 aa).

2 helical membrane-spanning segments follow: residues 33–53 (LLYV…KYYF) and 59–79 (SLLF…FMGF). A compositionally biased stretch (basic and acidic residues) spans 89-104 (EAEPDYRKKQESKNQD). Positions 89 to 140 (EAEPDYRKKQESKNQDFLKSQSNEPLEYASSSAVELEKEKNTREGLTILESS) are disordered. Residues 105–121 (FLKSQSNEPLEYASSSA) are compositionally biased toward polar residues.

It localises to the membrane. This is an uncharacterized protein from Schizosaccharomyces pombe (strain 972 / ATCC 24843) (Fission yeast).